We begin with the raw amino-acid sequence, 565 residues long: Granule-bound starch synthase 1b, chloroplastic/amyloplastic (565 aa).

The N-terminal 34 residues, 1–34 (VFLSMRNKTQLAKRRATNYETHRNSSRTSSPIVC), are a transit peptide targeting the chloroplast. Position 52 (K52) interacts with ADP-alpha-D-glucose.

This sequence belongs to the glycosyltransferase 1 family. Bacterial/plant glycogen synthase subfamily.

It localises to the plastid. The protein resides in the chloroplast. The protein localises to the amyloplast. It catalyses the reaction an NDP-alpha-D-glucose + [(1-&gt;4)-alpha-D-glucosyl](n) = [(1-&gt;4)-alpha-D-glucosyl](n+1) + a ribonucleoside 5'-diphosphate + H(+). The protein operates within glycan biosynthesis; starch biosynthesis. Involved in the synthesis of amylose in endosperm. This Hordeum vulgare (Barley) protein is Granule-bound starch synthase 1b, chloroplastic/amyloplastic.